We begin with the raw amino-acid sequence, 815 residues long: Bifunctional aspartokinase/homoserine dehydrogenase (815 aa).

The interval 1–249 (MRVLKFGGTS…VPDARLLPTL (249 aa)) is aspartokinase. The interface stretch occupies residues 250–470 (SYREAMELSY…NNKKVVDMFL (221 aa)). ACT domains lie at 320 to 392 (VSGP…PIEV) and 401 to 478 (VVGD…GVGG). The interval 471–815 (VGVGGVGGEL…FADILRTLQH (345 aa)) is homoserine dehydrogenase. NAD(+) is bound by residues V473, G475, V476, A504, and T555. V476 provides a ligand contact to NADP(+). V476 serves as a coordination point for NADPH. Position 555 (T555) interacts with NADP(+). 3 residues coordinate NADPH: T555, S556, and K579. K579 lines the NADP(+) pocket. Positions 606, 609, 611, and 613 each coordinate Na(+). Positions 664 and 667 each coordinate NADP(+). L-homoserine-binding residues include E667 and D678. K682 acts as the Proton donor in catalysis. G797 contacts NAD(+). Residue G797 participates in NADP(+) binding. Position 797 (G797) interacts with NADPH.

It in the N-terminal section; belongs to the aspartokinase family. In the C-terminal section; belongs to the homoserine dehydrogenase family. Homotetramer. Requires a metal cation as cofactor.

It catalyses the reaction L-homoserine + NADP(+) = L-aspartate 4-semialdehyde + NADPH + H(+). The enzyme catalyses L-homoserine + NAD(+) = L-aspartate 4-semialdehyde + NADH + H(+). It carries out the reaction L-aspartate + ATP = 4-phospho-L-aspartate + ADP. It functions in the pathway amino-acid biosynthesis; L-lysine biosynthesis via DAP pathway; (S)-tetrahydrodipicolinate from L-aspartate: step 1/4. Its pathway is amino-acid biosynthesis; L-methionine biosynthesis via de novo pathway; L-homoserine from L-aspartate: step 1/3. The protein operates within amino-acid biosynthesis; L-methionine biosynthesis via de novo pathway; L-homoserine from L-aspartate: step 3/3. It participates in amino-acid biosynthesis; L-threonine biosynthesis; L-threonine from L-aspartate: step 1/5. It functions in the pathway amino-acid biosynthesis; L-threonine biosynthesis; L-threonine from L-aspartate: step 3/5. Bifunctional aspartate kinase and homoserine dehydrogenase that catalyzes the first and the third steps toward the synthesis of lysine, methionine and threonine from aspartate. The sequence is that of Bifunctional aspartokinase/homoserine dehydrogenase (thrA) from Haemophilus influenzae (strain ATCC 51907 / DSM 11121 / KW20 / Rd).